Consider the following 512-residue polypeptide: MAHIRADEITSILRQEIENYERAIDVSEVGSVISVGDGIARIHGLEKVMAGELIEFPHDVAGIAMNLEEDQVGAVLLGDYTLIKEGDEVKRTKRIMSVPVGEALIGRVVNALGQPIDGKGPINATQFNPIERLAPGVVARQPVKEPMMTGIKAVDAMIPIGRGQRELIIGDRQTGKTAIALDAIINQKGGDMICIYVAIGQKRSTVAQVVKTLEDNGAMEYSIVVVASASDPAPMQYLAPFSGCAIGEYFRDSKRHALCIYDDLSKHAAAYREISLLLRRPPGREAFPGDVFYLHSRLLERAAKLNNEHGAGSLTALPFIETQAGDVSAYIPTNVISITDGQIFLEADLFNSNQRPAINVGISVSRVGGNAQTKAMKSIAGGLRLDLAQYRELAAFAQFGSDLDKSSQAQLNRGRHLVEILKQDQYQPLPLEKQIMIIWAGTKGYLDDIPVELCRKFEAELYRFSENAHRPVLDEIKTKKALDPDLTAKVKGIVEEFKGRFMAENAPAKAHA.

G170–T177 serves as a coordination point for ATP.

Belongs to the ATPase alpha/beta chains family. F-type ATPases have 2 components, CF(1) - the catalytic core - and CF(0) - the membrane proton channel. CF(1) has five subunits: alpha(3), beta(3), gamma(1), delta(1), epsilon(1). CF(0) has three main subunits: a(1), b(2) and c(9-12). The alpha and beta chains form an alternating ring which encloses part of the gamma chain. CF(1) is attached to CF(0) by a central stalk formed by the gamma and epsilon chains, while a peripheral stalk is formed by the delta and b chains.

Its subcellular location is the cell inner membrane. It carries out the reaction ATP + H2O + 4 H(+)(in) = ADP + phosphate + 5 H(+)(out). Functionally, produces ATP from ADP in the presence of a proton gradient across the membrane. The alpha chain is a regulatory subunit. The polypeptide is ATP synthase subunit alpha (Solibacter usitatus (strain Ellin6076)).